Reading from the N-terminus, the 503-residue chain is Protein O-glucosyltransferase 3 (503 aa).

A signal peptide spans 1-19 (MQALPLGLQLALLVAAGAG). The Filamin repeat unit spans residues 19-129 (GARVSAPRSL…VAHSPYILKG (111 aa)). N-linked (GlcNAc...) asparagine glycosylation is found at Asn-56 and Asn-302. The Prevents secretion from ER signature appears at 500–503 (REEL).

This sequence belongs to the KDELC family.

The protein resides in the endoplasmic reticulum lumen. The catalysed reaction is L-seryl-[EGF-like domain protein] + UDP-alpha-D-glucose = 3-O-(beta-D-glucosyl)-L-seryl-[EGF-like domain protein] + UDP + H(+). It catalyses the reaction L-seryl-[EGF-like domain protein] + UDP-alpha-D-xylose = 3-O-(beta-D-xylosyl)-L-seryl-[EGF-like domain protein] + UDP + H(+). The protein operates within protein modification; protein glycosylation. Protein glucosyltransferase that catalyzes the transfer of glucose from UDP-glucose to a serine residue within the consensus sequence peptide C-X-N-T-X-G-S-F-X-C. Can also catalyze the transfer of xylose from UDP-xylose but less efficiently. Specifically targets extracellular EGF repeats of proteins such as NOTCH1, NOTCH3, FBN1, FBN2 and LTBP1. May regulate the transport of NOTCH1 and NOTCH3 to the plasma membrane and thereby the Notch signaling pathway. The polypeptide is Protein O-glucosyltransferase 3 (Poglut3) (Mus musculus (Mouse)).